Consider the following 97-residue polypeptide: Large ribosomal subunit protein uL23 (97 aa).

This sequence belongs to the universal ribosomal protein uL23 family. In terms of assembly, part of the 50S ribosomal subunit. Contacts protein L29, and trigger factor when it is bound to the ribosome.

One of the early assembly proteins it binds 23S rRNA. One of the proteins that surrounds the polypeptide exit tunnel on the outside of the ribosome. Forms the main docking site for trigger factor binding to the ribosome. This chain is Large ribosomal subunit protein uL23, found in Sinorhizobium fredii (strain NBRC 101917 / NGR234).